The primary structure comprises 100 residues: Urease subunit gamma (100 aa).

It belongs to the urease gamma subunit family. As to quaternary structure, heterotrimer of UreA (gamma), UreB (beta) and UreC (alpha) subunits. Three heterotrimers associate to form the active enzyme.

It localises to the cytoplasm. It carries out the reaction urea + 2 H2O + H(+) = hydrogencarbonate + 2 NH4(+). It participates in nitrogen metabolism; urea degradation; CO(2) and NH(3) from urea (urease route): step 1/1. The chain is Urease subunit gamma from Synechococcus sp. (strain RCC307).